A 254-amino-acid polypeptide reads, in one-letter code: MPVRCQQSPVLAGSATLAALGALALYFAEPSGYGKYTESLTPAAIRLPARAAWFLQELPSFVVPAGILAGQPRSLFGPPATVLLGLFCAHYFHRTFVYSLLTRGRPFPVVFLFRGFVFCMGNGLLQGYYLVYCAEYPAEWYTDIRFSLGVFLFILGMGINIHSDYILRQLRKPGEVIYKIPQGGLFTYVSGANFLGEIIEWIGYALATWSLPALAFAFFSLCFLGLRAFHHHRFYVKMFEDYPKSRKALIPFIF.

A run of 4 helical transmembrane segments spans residues 8–28 (SPVL…LYFA), 72–92 (PRSL…AHYF), 146–166 (FSLG…SDYI), and 206–226 (LATW…FLGL).

This sequence belongs to the steroid 5-alpha reductase family.

Its subcellular location is the microsome membrane. The protein resides in the endoplasmic reticulum membrane. It carries out the reaction a 3-oxo-5alpha-steroid + NADP(+) = a 3-oxo-Delta(4)-steroid + NADPH + H(+). It catalyses the reaction 17beta-hydroxy-5alpha-androstan-3-one + NADP(+) = testosterone + NADPH + H(+). The enzyme catalyses 5alpha-pregnane-3,20-dione + NADP(+) = progesterone + NADPH + H(+). Its function is as follows. Converts testosterone (T) into 5-alpha-dihydrotestosterone (DHT) and progesterone or corticosterone into their corresponding 5-alpha-3-oxosteroids. It plays a central role in sexual differentiation and androgen physiology. The protein is 3-oxo-5-alpha-steroid 4-dehydrogenase 2 (SRD5A2) of Sus scrofa (Pig).